Reading from the N-terminus, the 186-residue chain is MKLPKTPFFSVFKPGYLAFVAFGLFLDLSSKYVIITKMYAHESIPVLGDFFRLSLTFNTGFVFGLFQDNALPSLFATGFAIVFLIFYRWENSDLGNAWGWNFVMAGAFGNFLDKFFVKIPGSGFRFGFTPEKPGIEFIGVVDFLDFEWPDFLLFDRWPAFNVADSCVSIGIVILLFTMDWKEMDKK.

Helical transmembrane passes span Phe-8–Leu-28, Ile-44–Gly-64, Phe-66–Phe-86, and Ala-97–Val-117. Active-site residues include Asp-142 and Asp-164. The chain crosses the membrane as a helical span at residues Trp-157–Thr-177.

It belongs to the peptidase A8 family.

Its subcellular location is the cell inner membrane. It catalyses the reaction Release of signal peptides from bacterial membrane prolipoproteins. Hydrolyzes -Xaa-Yaa-Zaa-|-(S,diacylglyceryl)Cys-, in which Xaa is hydrophobic (preferably Leu), and Yaa (Ala or Ser) and Zaa (Gly or Ala) have small, neutral side chains.. It participates in protein modification; lipoprotein biosynthesis (signal peptide cleavage). This protein specifically catalyzes the removal of signal peptides from prolipoproteins. The chain is Lipoprotein signal peptidase from Leptospira biflexa serovar Patoc (strain Patoc 1 / ATCC 23582 / Paris).